Consider the following 232-residue polypeptide: Small ribosomal subunit protein uS3 (232 aa).

The region spanning 39 to 107 (IRAILHKELK…DVVINIVEIR (69 aa)) is the KH type-2 domain.

It belongs to the universal ribosomal protein uS3 family. Part of the 30S ribosomal subunit. Forms a tight complex with proteins S10 and S14.

In terms of biological role, binds the lower part of the 30S subunit head. Binds mRNA in the 70S ribosome, positioning it for translation. The chain is Small ribosomal subunit protein uS3 from Rhodopseudomonas palustris (strain BisA53).